The chain runs to 1465 residues: Neuropathy target esterase sws (1465 aa).

The Lumenal portion of the chain corresponds to 1–34 (MDVLEMLRASASGSYNTIFSEAWCQYVSKQITAT). A helical membrane pass occupies residues 35–55 (MYMYCALGMMGVLFLAWFMYF). Residues 56 to 1465 (KRMARLRLRD…RSSANNETKN (1410 aa)) are Cytoplasmic-facing. Residue 174–301 (IFGHFEKPVF…IRVIQVIMIR (128 aa)) participates in a nucleoside 3',5'-cyclic phosphate binding. 2 stretches are compositionally biased toward polar residues: residues 331-349 (STMSGPINSQTSQSSRQTP) and 434-454 (QQSVGNLSTRRSSITQMTPDG). Disordered stretches follow at residues 331-421 (STMS…TEVH) and 434-460 (QQSVGNLSTRRSSITQMTPDGSHSCPP). Serine 446 and serine 455 each carry phosphoserine. A nucleoside 3',5'-cyclic phosphate contacts are provided by residues 484–611 (ELGL…VVRR) and 600–727 (IVLD…LSHR). One can recognise a PNPLA domain in the interval 954–1120 (LVLGGGGARG…VNNLPGHLWR (167 aa)). A GXGXXG motif is present at residues 958–963 (GGGARG). The GXSXG motif lies at 985–989 (GVSIG). Catalysis depends on serine 987, which acts as the Nucleophile. The Proton acceptor role is filled by aspartate 1107. The DGA/G signature appears at 1107 to 1109 (DGG). Serine 1201 carries the phosphoserine modification. Residues 1371 to 1465 (LERKTDKSTQ…RSSANNETKN (95 aa)) are disordered. Positions 1378–1390 (STQSSPPTSSRTS) are enriched in low complexity. Over residues 1392–1402 (RGKEEARHMDN) the composition is skewed to basic and acidic residues. Over residues 1413–1424 (TGSGATEGIHTS) the composition is skewed to polar residues. A compositionally biased stretch (basic and acidic residues) spans 1447-1456 (VYKDEDKENR).

This sequence belongs to the NTE family. As to quaternary structure, interacts with Pka-C3; interaction inhibits the catalytic function of Pka-C3 and the esterase activity of sws.

It localises to the endoplasmic reticulum membrane. The catalysed reaction is a 1-acyl-sn-glycero-3-phosphocholine + H2O = sn-glycerol 3-phosphocholine + a fatty acid + H(+). In terms of biological role, phospholipase B that deacylates intracellular phosphatidylcholine (PtdCho), generating glycerophosphocholine (GroPtdCho). This deacylation occurs at both sn-2 and sn-1 positions of PtdCho. Its specific chemical modification by certain organophosphorus (OP) compounds leads to distal axonopathy. Plays a role in the signaling mechanism between neurons and glia that regulates glia wrapping during development of the adult brain. Essential for membrane lipid homeostasis and cell survival in both neurons and glia of the adult brain. The chain is Neuropathy target esterase sws from Drosophila erecta (Fruit fly).